A 401-amino-acid chain; its full sequence is Glucose/mannose transporter GlcP (401 aa).

Transmembrane regions (helical) follow at residues 11–31 (AFFF…PFLL), 43–63 (VIIF…PLMI), 78–98 (IMLV…IIVM), 99–119 (AFLL…FVIA), 132–152 (EVLF…FIDI), 156–176 (FLPY…WLIF), 212–232 (LGFF…FANF), 247–267 (LISV…IGFV), 278–298 (LFSC…SNPI), 306–326 (LIGL…SIII), 336–356 (LFIA…GWSL), and 360–380 (TILL…GISV).

The protein belongs to the major facilitator superfamily.

It is found in the cell membrane. Functionally, can transport glucose, mannose, 2-deoxyglucose and methyl alpha-glucoside, but not galactose. The polypeptide is Glucose/mannose transporter GlcP (glcP) (Bacillus subtilis (strain 168)).